Here is a 129-residue protein sequence, read N- to C-terminus: NADH-quinone oxidoreductase subunit 15 (129 aa).

The protein belongs to the complex I Nqo15 family. NDH-1 is composed of 15 different subunits, Nqo1 to Nqo15. The complex has a L-shaped structure, with the hydrophobic arm (subunits Nqo7, Nqo8 and Nqo10 to Nqo14) embedded in the membrane and the hydrophilic peripheral arm (subunits Nqo1 to Nqo6, Nqo9 and Nqo15) protruding into the bacterial cytoplasm. The hydrophilic domain contains all the redox centers. Nqo15 is bound to the side of the complex near the N-terminus of Nqo3, where it interacts with subunits Nqo3, Nqo2, Nqo1, Nqo9 and Nqo4.

It is found in the cell membrane. The enzyme catalyses a quinone + NADH + 5 H(+)(in) = a quinol + NAD(+) + 4 H(+)(out). Its function is as follows. NDH-1 shuttles electrons from NADH, via FMN and iron-sulfur (Fe-S) centers, to quinones in the respiratory chain. The immediate electron acceptor for the enzyme in this species is menaquinone. Couples the redox reaction to proton translocation (for every two electrons transferred, four hydrogen ions are translocated across the cytoplasmic membrane), and thus conserves the redox energy in a proton gradient required for the synthesis of ATP. The Nqo15 subunit has probably a role in complex stabilization, and may be also involved in the storage of iron for iron-sulfur cluster regeneration in the complex. The chain is NADH-quinone oxidoreductase subunit 15 (nqo15) from Thermus thermophilus (strain ATCC 27634 / DSM 579 / HB8).